The chain runs to 204 residues: uncharacterized protein (204 aa).

This is an uncharacterized protein from Methanocaldococcus jannaschii (strain ATCC 43067 / DSM 2661 / JAL-1 / JCM 10045 / NBRC 100440) (Methanococcus jannaschii).